Consider the following 135-residue polypeptide: Large ribosomal subunit protein eL32 (135 aa).

Belongs to the eukaryotic ribosomal protein eL32 family.

This is Large ribosomal subunit protein eL32 from Methanococcus maripaludis (strain C6 / ATCC BAA-1332).